The primary structure comprises 277 residues: Digeranylgeranylglyceryl phosphate synthase (277 aa).

7 consecutive transmembrane segments (helical) span residues 16–36 (ILAGIVGILGALVAYEGIPDI), 84–104 (ALYYALLQYAIGSILAYFLNI), 107–127 (FVFATIAYFLTFLYGWKLKPL), 146–166 (GAIGVGRIGLAGYLAICAFLV), 200–220 (AIIAAIFGFLTVIASFLPVKV), 221–241 (GIGLGYAPIIIVDIIIIKASI), and 257–277 (LKIATFVAVISFLAGALTKGV).

The protein belongs to the UbiA prenyltransferase family. DGGGP synthase subfamily. It depends on Mg(2+) as a cofactor.

It is found in the cell membrane. It carries out the reaction sn-3-O-(geranylgeranyl)glycerol 1-phosphate + (2E,6E,10E)-geranylgeranyl diphosphate = 2,3-bis-O-(geranylgeranyl)-sn-glycerol 1-phosphate + diphosphate. Its pathway is membrane lipid metabolism; glycerophospholipid metabolism. Prenyltransferase that catalyzes the transfer of the geranylgeranyl moiety of geranylgeranyl diphosphate (GGPP) to the C2 hydroxyl of (S)-3-O-geranylgeranylglyceryl phosphate (GGGP). This reaction is the second ether-bond-formation step in the biosynthesis of archaeal membrane lipids. This Pyrococcus furiosus (strain ATCC 43587 / DSM 3638 / JCM 8422 / Vc1) protein is Digeranylgeranylglyceryl phosphate synthase.